Here is a 113-residue protein sequence, read N- to C-terminus: Small ribosomal subunit protein bS18 (113 aa).

The segment at 1–41 (MSEEKIVNTEAAPEAVAERPARAERSERPERPAKGPFGKKR) is disordered. Over residues 16-33 (VAERPARAERSERPERPA) the composition is skewed to basic and acidic residues.

Belongs to the bacterial ribosomal protein bS18 family. As to quaternary structure, part of the 30S ribosomal subunit. Forms a tight heterodimer with protein bS6.

Binds as a heterodimer with protein bS6 to the central domain of the 16S rRNA, where it helps stabilize the platform of the 30S subunit. This chain is Small ribosomal subunit protein bS18, found in Elusimicrobium minutum (strain Pei191).